A 328-amino-acid chain; its full sequence is tRNA methyltransferase 10 homolog A (328 aa).

Disordered stretches follow at residues 1-91 (MSSE…RKRV) and 281-328 (HKAC…PVLQ). Serine 22 bears the Phosphoserine mark. A coiled-coil region spans residues 43-83 (RQLKKLMKQKQWEEQREQRKEKRKEKRKRKKLERRQLESNS). Positions 52-62 (KQWEEQREQRK) are enriched in basic and acidic residues. The span at 63–75 (EKRKEKRKRKKLE) shows a compositional bias: basic residues. Residues 88-278 (RKRVRRDVAR…TILPQRKGAV (191 aa)) form the SAM-dependent MTase TRM10-type domain. The segment covering 305 to 319 (ESCRDNPDSPQKDEQ) has biased composition (basic and acidic residues).

This sequence belongs to the class IV-like SAM-binding methyltransferase superfamily. TRM10 family. In terms of assembly, interacts with tRNA.

Its subcellular location is the nucleus. It localises to the nucleolus. It catalyses the reaction guanosine(9) in tRNA + S-adenosyl-L-methionine = N(1)-methylguanosine(9) in tRNA + S-adenosyl-L-homocysteine + H(+). In terms of biological role, S-adenosyl-L-methionine-dependent guanine N(1)-methyltransferase that catalyzes the formation of N(1)-methylguanine at position 9 (m1G9) in tRNAs. Probably not able to catalyze formation of N(1)-methyladenine at position 9 (m1A9) in tRNAs. In Mus musculus (Mouse), this protein is tRNA methyltransferase 10 homolog A (Trmt10a).